The primary structure comprises 303 residues: Cytosolic Fe-S cluster assembly factor CFD1 (303 aa).

Residue 15–22 (GKGGVGKS) participates in ATP binding. [4Fe-4S] cluster-binding residues include Cys199 and Cys202.

This sequence belongs to the Mrp/NBP35 ATP-binding proteins family. NUBP2/CFD1 subfamily. As to quaternary structure, heterotetramer of 2 NBP35 and 2 CFD1 chains. [4Fe-4S] cluster is required as a cofactor.

It is found in the cytoplasm. Functionally, component of the cytosolic iron-sulfur (Fe/S) protein assembly (CIA) machinery. Required for maturation of extramitochondrial Fe-S proteins. The NBP35-CFD1 heterotetramer forms a Fe-S scaffold complex, mediating the de novo assembly of an Fe-S cluster and its transfer to target apoproteins. This is Cytosolic Fe-S cluster assembly factor CFD1 from Chaetomium globosum (strain ATCC 6205 / CBS 148.51 / DSM 1962 / NBRC 6347 / NRRL 1970) (Soil fungus).